Reading from the N-terminus, the 843-residue chain is Glycogen phosphorylase, brain form (843 aa).

At Ala-2 the chain carries N-acetylalanine. Position 15 is a phosphoserine; by PHK; in form phosphorylase A (Ser-15). Residues Asp-43, Tyr-197, and Arg-310 each contribute to the AMP site. A Phosphotyrosine modification is found at Tyr-197. At Tyr-473 the chain carries Phosphotyrosine. Lys-569 lines the pyridoxal 5'-phosphate pocket. The segment at Thr-677–Gly-678 is pyridoxal 5'-phosphate. An N6-(pyridoxal phosphate)lysine modification is found at Lys-681.

Belongs to the glycogen phosphorylase family. As to quaternary structure, homodimer. Dimers associate into a tetramer to form the enzymatically active phosphorylase A. Pyridoxal 5'-phosphate is required as a cofactor. Phosphorylation of Ser-15 converts phosphorylase B (unphosphorylated) to phosphorylase A.

It catalyses the reaction [(1-&gt;4)-alpha-D-glucosyl](n) + phosphate = [(1-&gt;4)-alpha-D-glucosyl](n-1) + alpha-D-glucose 1-phosphate. Activity of phosphorylase is controlled both by allosteric means (through the non-covalent binding of metabolites) and by covalent modification. Thus AMP allosterically activates, whereas ATP, ADP, and glucose-6-phosphate allosterically inhibit, phosphorylase B. Its function is as follows. Glycogen phosphorylase that regulates glycogen mobilization. Phosphorylase is an important allosteric enzyme in carbohydrate metabolism. Enzymes from different sources differ in their regulatory mechanisms and in their natural substrates. However, all known phosphorylases share catalytic and structural properties. This is Glycogen phosphorylase, brain form (PYGB) from Bos taurus (Bovine).